A 238-amino-acid chain; its full sequence is MASRGVNKVILVGNLGQDPEVRYMPNGNAVANITVATSESWKDQQGQQQERTEWHRVVLFGKLAEITGEYLRKGSQVYLEGKLQTRKWKDQSGQDRYSTEVVIDQSGSMQMLGSRNQGGQGAPMGGMPQNGGYQSAPQQAAPAQNQYAPAPQAAPAYQAPAPQPQSGYNQPPAQQSYGQQQAQPHVQPHAQPQQGGYAPKPAAPAYQAPAAPAQRPAPQPQQNFTPDLDDGWDDDIPF.

Residues 6–110 (VNKVILVGNL…VVIDQSGSMQ (105 aa)) form the SSB domain. Residues 54–60 (WHRVVLF) mediate DNA binding. Residues 103–238 (IDQSGSMQML…DDGWDDDIPF (136 aa)) are disordered. Positions 105–115 (QSGSMQMLGSR) are enriched in polar residues. 2 stretches are compositionally biased toward low complexity: residues 125 to 160 (GGMPQNGGYQSAPQQAAPAQNQYAPAPQAAPAYQAP) and 170 to 222 (QPPA…QPQQ). A compositionally biased stretch (acidic residues) spans 227–238 (DLDDGWDDDIPF). An Important for interaction with partner proteins motif is present at residues 233 to 238 (DDDIPF).

As to quaternary structure, homotetramer.

Plays an important role in DNA replication, recombination and repair. Binds to ssDNA and to an array of partner proteins to recruit them to their sites of action during DNA metabolism. The protein is Single-stranded DNA-binding protein (ssb) of Shewanella oneidensis (strain ATCC 700550 / JCM 31522 / CIP 106686 / LMG 19005 / NCIMB 14063 / MR-1).